A 466-amino-acid chain; its full sequence is Asparagine--tRNA ligase (466 aa).

Belongs to the class-II aminoacyl-tRNA synthetase family. In terms of assembly, homodimer.

The protein localises to the cytoplasm. It catalyses the reaction tRNA(Asn) + L-asparagine + ATP = L-asparaginyl-tRNA(Asn) + AMP + diphosphate + H(+). The chain is Asparagine--tRNA ligase from Vibrio cholerae serotype O1 (strain ATCC 39315 / El Tor Inaba N16961).